Consider the following 176-residue polypeptide: Alkyl hydroperoxide reductase AhpD (176 aa).

The Proton donor role is filled by Cys-131. Cys-131 and Cys-134 are oxidised to a cystine. The active-site Cysteine sulfenic acid (-SOH) intermediate is the Cys-134.

Belongs to the AhpD family.

The enzyme catalyses N(6)-[(R)-dihydrolipoyl]-L-lysyl-[lipoyl-carrier protein] + a hydroperoxide = N(6)-[(R)-lipoyl]-L-lysyl-[lipoyl-carrier protein] + an alcohol + H2O. Its function is as follows. Antioxidant protein with alkyl hydroperoxidase activity. Required for the reduction of the AhpC active site cysteine residues and for the regeneration of the AhpC enzyme activity. The polypeptide is Alkyl hydroperoxide reductase AhpD (Methylobacterium sp. (strain 4-46)).